Reading from the N-terminus, the 166-residue chain is Large ribosomal subunit protein uL10 (166 aa).

Belongs to the universal ribosomal protein uL10 family. As to quaternary structure, part of the ribosomal stalk of the 50S ribosomal subunit. The N-terminus interacts with L11 and the large rRNA to form the base of the stalk. The C-terminus forms an elongated spine to which L12 dimers bind in a sequential fashion forming a multimeric L10(L12)X complex.

In terms of biological role, forms part of the ribosomal stalk, playing a central role in the interaction of the ribosome with GTP-bound translation factors. The polypeptide is Large ribosomal subunit protein uL10 (Bacillus pumilus (strain SAFR-032)).